Here is a 341-residue protein sequence, read N- to C-terminus: Gibberellin 2-beta-dioxygenase 5 (341 aa).

Residues arginine 187–proline 290 enclose the Fe2OG dioxygenase domain. A 2-oxoglutarate-binding site is contributed by tyrosine 198. Fe cation-binding residues include histidine 213, aspartate 215, and histidine 271. 2-oxoglutarate-binding residues include arginine 281 and serine 283.

The protein belongs to the iron/ascorbate-dependent oxidoreductase family. GA2OX subfamily. Requires L-ascorbate as cofactor. It depends on Fe(2+) as a cofactor. In terms of tissue distribution, expressed in roots, leaves, culms, leaf sheaths and young panicles.

The protein localises to the cytoplasm. The protein resides in the nucleus. It catalyses the reaction gibberellin A1 + 2-oxoglutarate + O2 = gibberellin A8 + succinate + CO2. Its pathway is plant hormone biosynthesis; gibberellin biosynthesis. In terms of biological role, catalyzes the 2-beta-hydroxylation of several biologically active gibberellins (GAs), leading to the homeostatic regulation of their endogenous level. Catabolism of GAs plays a central role in plant development. In vitro, converts GA12 and GA53 to the corresponding 2-beta-hydroxylated products GA110 and GA97, respectively. The protein is Gibberellin 2-beta-dioxygenase 5 of Oryza sativa subsp. japonica (Rice).